Here is an 825-residue protein sequence, read N- to C-terminus: NT-3 growth factor receptor (825 aa).

A signal peptide spans 1 to 31; the sequence is MDVSLCPAKCSFWRIFLLGSVWLDYVGSVLA. Intrachain disulfides connect cysteine 32–cysteine 38 and cysteine 36–cysteine 45. Topologically, residues 32 to 429 are extracellular; sequence CPANCVCSKT…TVTHKPEEDT (398 aa). N-linked (GlcNAc...) asparagine glycans are attached at residues asparagine 68, asparagine 72, and asparagine 79. 2 LRR repeats span residues 104–125 and 128–149; these read GLQK…AFAK and HLRY…LFQT. N-linked (GlcNAc...) asparagine glycosylation is found at asparagine 133 and asparagine 163. The LRRCT domain maps to 160-209; the sequence is NFFNCSCDIRWMQLWQEQGEARLDSQSLYCISADGSQLPLFRMNISQCDL. 2 cysteine pairs are disulfide-bonded: cysteine 164-cysteine 189 and cysteine 166-cysteine 207. Residues asparagine 203, asparagine 218, asparagine 232, asparagine 259, asparagine 267, asparagine 272, and asparagine 294 are each glycosylated (N-linked (GlcNAc...) asparagine). 2 consecutive Ig-like C2-type domains span residues 210–300 and 309–382; these read PEIS…VALT and SLVE…IAKN. Cysteine 231 and cysteine 284 form a disulfide bridge. Residues cysteine 320 and cysteine 362 are joined by a disulfide bond. N-linked (GlcNAc...) asparagine glycans are attached at residues asparagine 375 and asparagine 388. A helical transmembrane segment spans residues 430-453; that stretch reads FGVSIAVGLAAFACVLLVVLFIMI. The Cytoplasmic segment spans residues 454–825; it reads NKYGRRSKFG…ATPIYLDILG (372 aa). At serine 493 the chain carries Phosphoserine. The residue at position 516 (tyrosine 516) is a Phosphotyrosine. Positions 538–825 constitute a Protein kinase domain; sequence IVLKRELGEG…ATPIYLDILG (288 aa). Residues 544 to 552 and lysine 572 each bind ATP; that span reads LGEGAFGKV. Residue aspartate 679 is the Proton acceptor of the active site. A phosphotyrosine; by autocatalysis mark is found at tyrosine 705, tyrosine 709, and tyrosine 710.

This sequence belongs to the protein kinase superfamily. Tyr protein kinase family. Insulin receptor subfamily. Exists in a dynamic equilibrium between monomeric (low affinity) and dimeric (high affinity) structures. Binds SH2B2. Interacts with SQSTM1 and KIDINS220. Interacts with PTPRS. Interacts with MAPK8IP3/JIP3. Post-translationally, ligand-mediated auto-phosphorylation. In terms of tissue distribution, isoform 2 expression is restricted to specific areas in adult brain. Isoform 3 transcripts are readily detected early during embryogenesis and are expressed predominantly in adult brain and gonads.

It is found in the membrane. It carries out the reaction L-tyrosyl-[protein] + ATP = O-phospho-L-tyrosyl-[protein] + ADP + H(+). Its function is as follows. Receptor tyrosine kinase involved in nervous system and probably heart development. Upon binding of its ligand NTF3/neurotrophin-3, NTRK3 autophosphorylates and activates different signaling pathways, including the phosphatidylinositol 3-kinase/AKT and the MAPK pathways, that control cell survival and differentiation. The polypeptide is NT-3 growth factor receptor (Ntrk3) (Mus musculus (Mouse)).